Consider the following 202-residue polypeptide: T-cell surface glycoprotein CD3 epsilon chain (202 aa).

Residues 1 to 21 (MQSRNLWRILGLCLLSVGAWG) form the signal peptide. Residues 22 to 122 (QDEDFKASDD…VCANCIEVNL (101 aa)) are Extracellular-facing. The Ig-like domain occupies 37–107 (PEKRFKVSIS…ADSIKEKSYL (71 aa)). Cysteines 54 and 96 form a disulfide. Residues 123 to 143 (MAVVTIIVADICLTLGLLLMV) traverse the membrane as a helical segment. Residues 144–202 (YYWSKTRKANAKPVMRGTGAGSRPRGQNKEKPPPVPNPDYEPIRKGQQDLYSGLNQRGI) lie on the Cytoplasmic side of the membrane. Residues 156 to 202 (PVMRGTGAGSRPRGQNKEKPPPVPNPDYEPIRKGQQDLYSGLNQRGI) form a disordered region. The segment at 170–187 (QNKEKPPPVPNPDYEPIR) is NUMB-binding region. The 28-residue stretch at 173–200 (EKPPPVPNPDYEPIRKGQQDLYSGLNQR) folds into the ITAM domain. A proline-rich sequence region spans residues 174–181 (KPPPVPNP). Y183 and Y194 each carry phosphotyrosine. Polar residues predominate over residues 192–202 (DLYSGLNQRGI).

The TCR-CD3 complex is composed of a CD3D/CD3E and a CD3G/CD3E heterodimers that preferentially associate with TCRalpha and TCRbeta, respectively, to form TCRalpha/CD3E/CD3G and TCRbeta/CD3G/CD3E trimers. In turn, the hexamer interacts with CD3Z homodimer to form the TCR-CD3 complex. Alternatively, TCRalpha and TCRbeta can be replaced by TCRgamma and TCRdelta. Interacts with CD6. Interacts (via Proline-rich sequence) with NCK1; the interaction is ligand dependent but independent of tyrosine kinase activation. In terms of processing, phosphorylated on Tyr residues after T-cell receptor triggering by LCK in association with CD4/CD8.

It localises to the cell membrane. Its function is as follows. Part of the TCR-CD3 complex present on T-lymphocyte cell surface that plays an essential role in adaptive immune response. When antigen presenting cells (APCs) activate T-cell receptor (TCR), TCR-mediated signals are transmitted across the cell membrane by the CD3 chains CD3D, CD3E, CD3G and CD3Z. All CD3 chains contain immunoreceptor tyrosine-based activation motifs (ITAMs) in their cytoplasmic domain. Upon TCR engagement, these motifs become phosphorylated by Src family protein tyrosine kinases LCK and FYN, resulting in the activation of downstream signaling pathways. In addition of this role of signal transduction in T-cell activation, CD3E plays an essential role in correct T-cell development. Also participates in internalization and cell surface down-regulation of TCR-CD3 complexes via endocytosis sequences present in CD3E cytosolic region. In addition to its role as a TCR coreceptor, it serves as a receptor for ITPRIPL1. Ligand recognition inhibits T-cell activation by promoting interaction with NCK1, which prevents CD3E-ZAP70 interaction and blocks the ERK-NFkB signaling cascade and calcium influx. The polypeptide is T-cell surface glycoprotein CD3 epsilon chain (CD3E) (Canis lupus familiaris (Dog)).